A 429-amino-acid polypeptide reads, in one-letter code: Enolase (429 aa).

Gln-167 is a (2R)-2-phosphoglycerate binding site. Glu-209 serves as the catalytic Proton donor. Mg(2+)-binding residues include Asp-246, Glu-289, and Asp-316. Lys-341, Arg-370, Ser-371, and Lys-392 together coordinate (2R)-2-phosphoglycerate. Lys-341 serves as the catalytic Proton acceptor.

It belongs to the enolase family. As to quaternary structure, component of the RNA degradosome, a multiprotein complex involved in RNA processing and mRNA degradation. It depends on Mg(2+) as a cofactor.

It is found in the cytoplasm. The protein localises to the secreted. The protein resides in the cell surface. It catalyses the reaction (2R)-2-phosphoglycerate = phosphoenolpyruvate + H2O. It participates in carbohydrate degradation; glycolysis; pyruvate from D-glyceraldehyde 3-phosphate: step 4/5. Catalyzes the reversible conversion of 2-phosphoglycerate (2-PG) into phosphoenolpyruvate (PEP). It is essential for the degradation of carbohydrates via glycolysis. In Ectopseudomonas mendocina (strain ymp) (Pseudomonas mendocina), this protein is Enolase.